The sequence spans 925 residues: MITGLLKKVFGSRNERLIKQYRRTVAQINALEPKFEQLSDDELRGMTETFRQRHAGGESLEALLPEAFAVCREASKRVMKMRHFDVQLIGGMVLNDNKIAEMRTGEGKTLTATLAVYLNAITGQGVHVVTVNDYLAQRDAEWMGRLYNFLGLSVGVNLSQMPHDAKQAAYNSDITYGTNNEFGFDYLRDNMVYDPSQRVQRPLNYAIVDEVDSILIDEARTPLIISGQAENQTDLYQRMNGIPKLLERQIGEEKADGTGVEKPGDYYVDEKGHQVYLTEAGHEKAEEILSQQGLIGEGESLYAPQNITLMHHLYAALRAHSLFHRDQHYVVQNDEVVIVDEFTGRLMTGRRWSDGLHQAVEAKEGVTVQQENQTLATITFQNYFRMYNKLAGMTGTADTEAYEFQEIYGLEVVVIPTNRPAQRKDQQDQIYKTGKERYDAVVRDIRDCYERGQPVLVGTTSIETSEYLSGLLDREQLPHQVLNAKQHAREAEIVAQAGRPKMITIATNMAGRGTDIVLGGNVEKQSGFIEADPNLSDAEKAARIKQLEDEWHSLHEQVKAAGGLHIVGTERHESRRIDNQLRGRAGRQGDPGSSRFYLSLDDQLLRIFAGDRVRAIMERLKMPEGEPIEAGIVTRSIESAQRKVEGRNFDIRKQLLQYDDVANDQRKEIYKLRNDVLEAQDVGDMVTNLRESVLVELFRDHVPADTMEEQWNISGLETRLREDWGLEVPLAQTIEGAQSIEDEELLNLIMKAAAERYDGKVAMVGRESFAGFERSVMLQSIDTHWREHLAALDHLRQGIHLRGYAQKDPKQEYKRESFELFARLLDLIKNEVTRVTFNVQIQSPEELEQASEEIEEGLSHLENIQYKHDEFAEGREPVEEAPSPRTGAAMAAAELALAGMPKVGRNDPCPCGSGKKFKQCHGRLS.

ATP contacts are provided by residues Gln87, Gly105 to Thr109, and Asp515. 4 residues coordinate Zn(2+): Cys909, Cys911, Cys920, and His921.

This sequence belongs to the SecA family. In terms of assembly, monomer and homodimer. Part of the essential Sec protein translocation apparatus which comprises SecA, SecYEG and auxiliary proteins SecDF-YajC and YidC. The cofactor is Zn(2+).

It localises to the cell inner membrane. Its subcellular location is the cytoplasm. It carries out the reaction ATP + H2O + cellular proteinSide 1 = ADP + phosphate + cellular proteinSide 2.. Its function is as follows. Part of the Sec protein translocase complex. Interacts with the SecYEG preprotein conducting channel. Has a central role in coupling the hydrolysis of ATP to the transfer of proteins into and across the cell membrane, serving both as a receptor for the preprotein-SecB complex and as an ATP-driven molecular motor driving the stepwise translocation of polypeptide chains across the membrane. In Cupriavidus necator (strain ATCC 17699 / DSM 428 / KCTC 22496 / NCIMB 10442 / H16 / Stanier 337) (Ralstonia eutropha), this protein is Protein translocase subunit SecA.